A 296-amino-acid polypeptide reads, in one-letter code: Nucleotide-binding protein spr1424 (296 aa).

An ATP-binding site is contributed by 13 to 20 (GMGGAGKT). 63 to 66 (DMRS) contacts GTP.

The protein belongs to the RapZ-like family.

Functionally, displays ATPase and GTPase activities. The sequence is that of Nucleotide-binding protein spr1424 from Streptococcus pneumoniae (strain ATCC BAA-255 / R6).